The sequence spans 124 residues: Ragulator complex protein LAMTOR3 homolog (124 aa).

It belongs to the LAMTOR3 family. Part of the Ragulator complex composed of Lamtor3, Lamtor2, CG14184, CG14812, and Lamtor4.

Functionally, regulator of the TOR pathway, a signaling cascade that promotes cell growth in response to growth factors, energy levels, and amino acids. As part of the Ragulator complex, may activate the TOR signaling cascade in response to amino acids. This Drosophila melanogaster (Fruit fly) protein is Ragulator complex protein LAMTOR3 homolog.